A 2555-amino-acid chain; its full sequence is Neurogenic locus notch homolog protein 1 (2555 aa).

Residues 1 to 18 form the signal peptide; it reads MPPLLAPLLCLALLPALA. Topologically, residues 19–1735 are extracellular; that stretch reads ARGPRCSQPG…VEPPPPAQLH (1717 aa). EGF-like domains lie at 20-58, 59-99, 102-139, and 140-176; these read RGPRCSQPGETCLNGGKCEAANGTEACVCGGAFVGPRCQ, DPNP…PLCL, LDNACLTNPCRNGGTCDLLTLTEYKCRCPPGWSGKSCQ, and QADPCASNPCANGGQCLPFEASYICHCPPSFHGPTCR. 33 cysteine pairs are disulfide-bonded: Cys-24–Cys-37, Cys-31–Cys-46, Cys-48–Cys-57, Cys-63–Cys-74, Cys-68–Cys-87, Cys-89–Cys-98, Cys-106–Cys-117, Cys-111–Cys-127, Cys-129–Cys-138, Cys-144–Cys-155, Cys-149–Cys-164, Cys-166–Cys-175, Cys-182–Cys-195, Cys-189–Cys-204, Cys-206–Cys-215, Cys-222–Cys-233, Cys-227–Cys-243, Cys-245–Cys-254, Cys-261–Cys-272, Cys-266–Cys-281, Cys-283–Cys-292, Cys-299–Cys-312, Cys-306–Cys-321, Cys-323–Cys-332, Cys-339–Cys-350, Cys-344–Cys-359, Cys-361–Cys-370, Cys-376–Cys-387, Cys-381–Cys-398, Cys-400–Cys-409, Cys-416–Cys-429, Cys-423–Cys-438, and Cys-440–Cys-449. Residue Asn-41 is glycosylated (N-linked (GlcNAc...) asparagine). A glycan (O-linked (Glc...) serine) is linked at Ser-65. The O-linked (Fuc...) threonine glycan is linked to Thr-73. Thr-116 carries an O-linked (Fuc...) threonine glycan. Ser-146 carries O-linked (Glc...) serine glycosylation. The EGF-like 5; calcium-binding domain maps to 178–216; that stretch reads DVNECGQKPGLCRHGGTCHNEVGSYRCVCRATHTGPNCE. Residue Thr-194 is glycosylated (O-linked (Fuc...) threonine). The 38-residue stretch at 218–255 folds into the EGF-like 6 domain; it reads PYVPCSPSPCQNGGTCRPTGDVTHECACLPGFTGQNCE. O-linked (Fuc...) threonine; alternate glycosylation occurs at Thr-232. Thr-232 carries O-linked (GalNAc...) threonine; alternate glycosylation. The EGF-like 7; calcium-binding domain occupies 257-293; that stretch reads NIDDCPGNNCKNGGACVDGVNTYNCRCPPEWTGQYCT. The region spanning 295–333 is the EGF-like 8; calcium-binding domain; it reads DVDECQLMPNACQNGGTCHNTHGGYNCVCVNGWTGEDCS. Thr-311 is a glycosylation site (O-linked (Fuc...) threonine). Residues 335-371 form the EGF-like 9; calcium-binding domain; the sequence is NIDDCASAACFHGATCHDRVASFYCECPHGRTGLLCH. Ser-341 is a glycosylation site (O-linked (Glc...) serine). The O-linked (Fuc...) threonine glycan is linked to Thr-349. Positions 372 to 410 constitute an EGF-like 10 domain; that stretch reads LNDACISNPCNEGSNCDTNPVNGKAICTCPSGYTGPACS. Ser-378 is a glycosylation site (O-linked (Glc...) serine). In terms of domain architecture, EGF-like 11; calcium-binding spans 412 to 450; sequence DVDECSLGANPCEHAGKCINTLGSFECQCLQGYTGPRCE. Positions 420-421 are interaction with DLL4; that stretch reads AN. Ca(2+)-binding residues include Thr-432 and Ser-435. Ser-435 carries an O-linked (Glc...) serine glycan. The segment at 448-452 is interaction with DLL4; the sequence is RCEID. Residues Asp-452, Val-453, and Glu-455 each contribute to the Ca(2+) site. One can recognise an EGF-like 12; calcium-binding domain in the interval 452-488; the sequence is DVNECVSNPCQNDATCLDQIGEFQCICMPGYEGVHCE. 3 cysteine pairs are disulfide-bonded: Cys-456-Cys-467, Cys-461-Cys-476, and Cys-478-Cys-487. Residue Ser-458 is glycosylated (O-linked (Glc...) serine). Thr-466 is a glycosylation site (O-linked (Fuc...) threonine). Asp-469 and Gln-470 together coordinate Ca(2+). Positions 490, 491, and 493 each coordinate Ca(2+). The region spanning 490-526 is the EGF-like 13; calcium-binding domain; it reads NTDECASSPCLHNGRCLDKINEFQCECPTGFTGHLCQ. Disulfide bonds link Cys-494–Cys-505, Cys-499–Cys-514, Cys-516–Cys-525, Cys-532–Cys-543, Cys-537–Cys-552, Cys-554–Cys-563, Cys-570–Cys-580, Cys-575–Cys-589, Cys-591–Cys-600, Cys-607–Cys-618, Cys-612–Cys-627, Cys-629–Cys-638, Cys-645–Cys-655, Cys-650–Cys-664, Cys-666–Cys-675, Cys-682–Cys-693, Cys-687–Cys-702, Cys-704–Cys-713, Cys-720–Cys-730, Cys-725–Cys-739, Cys-741–Cys-750, Cys-757–Cys-768, Cys-762–Cys-777, Cys-779–Cys-788, Cys-795–Cys-806, Cys-800–Cys-815, Cys-817–Cys-826, Cys-833–Cys-844, Cys-838–Cys-855, Cys-857–Cys-866, Cys-873–Cys-884, Cys-878–Cys-893, Cys-895–Cys-904, Cys-911–Cys-922, Cys-916–Cys-931, Cys-933–Cys-942, Cys-949–Cys-960, Cys-954–Cys-969, Cys-971–Cys-980, Cys-987–Cys-998, Cys-992–Cys-1007, Cys-1009–Cys-1018, Cys-1025–Cys-1036, Cys-1030–Cys-1045, Cys-1047–Cys-1056, Cys-1063–Cys-1074, Cys-1068–Cys-1083, Cys-1085–Cys-1094, Cys-1101–Cys-1122, Cys-1116–Cys-1131, Cys-1133–Cys-1142, Cys-1149–Cys-1160, Cys-1154–Cys-1169, Cys-1171–Cys-1180, Cys-1187–Cys-1198, Cys-1192–Cys-1207, Cys-1209–Cys-1218, Cys-1238–Cys-1253, Cys-1255–Cys-1264, Cys-1271–Cys-1284, Cys-1276–Cys-1293, Cys-1295–Cys-1304, Cys-1311–Cys-1322, Cys-1316–Cys-1334, Cys-1336–Cys-1345, Cys-1352–Cys-1363, Cys-1357–Cys-1372, Cys-1374–Cys-1383, Cys-1391–Cys-1403, Cys-1397–Cys-1414, Cys-1416–Cys-1425, Cys-1449–Cys-1472, Cys-1454–Cys-1467, and Cys-1463–Cys-1479. Ser-496 carries O-linked (Glc...) serine glycosylation. 2 residues coordinate Ca(2+): Asp-507 and Lys-508. One can recognise an EGF-like 14; calcium-binding domain in the interval 528–564; sequence DVDECASTPCKNGAKCLDGPNTYTCVCTEGYTGTHCE. O-linked (Glc...) serine glycosylation occurs at Ser-534. In terms of domain architecture, EGF-like 15; calcium-binding spans 566–601; sequence DIDECDPDPCHYGSCKDGVATFTCLCRPGYTGHHCE. One can recognise an EGF-like 16; calcium-binding domain in the interval 603–639; that stretch reads NINECSSQPCRHGGTCQDRDNAYLCFCLKGTTGPNCE. A glycan (O-linked (Glc...) serine) is linked at Ser-609. An O-linked (Fuc...) threonine glycan is attached at Thr-617. Residues 641–676 form the EGF-like 17; calcium-binding domain; it reads NLDDCASSPCDSGTCLDKIDGYECACEPGYTGSMCN. Ser-647 carries O-linked (Glc...) serine glycosylation. One can recognise an EGF-like 18; calcium-binding domain in the interval 678-714; it reads NIDECAGNPCHNGGTCEDGINGFTCRCPEGYHDPTCL. Residue Thr-692 is glycosylated (O-linked (Fuc...) threonine). Residues 716–751 enclose the EGF-like 19; calcium-binding domain; sequence EVNECNSNPCVHGACRDSLNGYKCDCDPGWSGTNCD. Residue Ser-722 is glycosylated (O-linked (Glc...) serine). The EGF-like 20 domain occupies 753–789; sequence NNNECESNPCVNGGTCKDMTSGYVCTCREGFSGPNCQ. Residue Ser-759 is glycosylated (O-linked (Glc...) serine). An O-linked (Fuc...) threonine glycan is attached at Thr-767. An O-linked (GlcNAc) serine glycan is attached at Ser-784. One can recognise an EGF-like 21; calcium-binding domain in the interval 791–827; it reads NINECASNPCLNQGTCIDDVAGYKCNCLLPYTGATCE. A glycan (O-linked (Glc...) serine) is linked at Ser-797. Thr-805 is a glycosylation site (O-linked (Fuc...) threonine). One can recognise an EGF-like 22 domain in the interval 829 to 867; the sequence is VLAPCAPSPCRNGGECRQSEDYESFSCVCPTGWQGQTCE. The EGF-like 23; calcium-binding domain occupies 869–905; that stretch reads DINECVLSPCRHGASCQNTHGGYRCHCQAGYSGRNCE. Positions 907 to 943 constitute an EGF-like 24 domain; it reads DIDDCRPNPCHNGGSCTDGINTAFCDCLPGFRGTFCE. O-linked (Fuc) serine glycosylation occurs at Ser-921. In terms of domain architecture, EGF-like 25; calcium-binding spans 945-981; it reads DINECASDPCRNGANCTDCVDSYTCTCPAGFSGIHCE. Ser-951 is a glycosylation site (O-linked (Glc...) serine). A glycan (N-linked (GlcNAc...) asparagine) is linked at Asn-959. 5 consecutive EGF-like domains span residues 983–1019, 1021–1057, 1059–1095, 1097–1143, and 1145–1181; these read NTPDCTESSCFNGGTCVDGINSFTCLCPPGFTGSYCQ, DVNECDSQPCLHGGTCQDGCGSYRCTCPQGYTGPNCQ, LVHWCDSSPCKNGGKCWQTHTQYRCECPSGWTGLYCD, PSVS…SYCE, and LVDECSPSPCQNGATCTDYLGGYSCKCVAGYHGVNCS. The O-linked (Fuc...) threonine glycan is linked to Thr-997. Ser-1027 is a glycosylation site (O-linked (Glc...) serine). A glycan (O-linked (Fuc...) threonine) is linked at Thr-1035. An O-linked (Glc...) serine glycan is attached at Ser-1065. A glycan (O-linked (Fuc...) threonine) is linked at Thr-1159. Asn-1179 carries an N-linked (GlcNAc...) asparagine glycan. The region spanning 1183 to 1219 is the EGF-like 31; calcium-binding domain; it reads EIDECLSHPCQNGGTCLDLPNTYKCSCPRGTQGVHCE. An O-linked (Glc...) serine glycan is attached at Ser-1189. Thr-1197 carries an O-linked (Fuc...) threonine glycan. The EGF-like 32; calcium-binding domain maps to 1221–1265; sequence NVDDCNPPVDPVSRSPKCFNNGTCVDQVGGYSCTCPPGFVGERCE. A glycan (N-linked (GlcNAc...) asparagine) is linked at Asn-1241. EGF-like domains follow at residues 1267 to 1305, 1307 to 1346, 1348 to 1384, and 1387 to 1426; these read DVNECLSNPCDARGTQNCVQRVNDFHCECRAGHTGRRCE, VINGCKGKPCKNGGTCAVASNTARGFICKCPAGFEGATCE, DARTCGSLRCLNGGTCISGPRSPTCLCLGPFTGPECQ, and ASSPCLGGNPCYNQGTCEPTSESPFYRCLCPAKFNGLLCH. Ser-1273 carries an O-linked (Glc...) serine glycan. Residue Thr-1362 is glycosylated (O-linked (Fuc...) threonine). Thr-1379 is a glycosylation site (O-linked (GlcNAc...) threonine). Thr-1402 carries an O-linked (Fuc...) threonine; alternate glycan. The O-linked (GalNAc...) threonine; alternate glycan is linked to Thr-1402. 3 LNR repeats span residues 1449-1489, 1490-1531, and 1532-1571; these read CELP…PWKN, CTQS…CNPL, and YDQYCKDHFSDGHCDQGCNSAECEWDGLDCAEHVPERLAA. Ca(2+)-binding residues include Asp-1457, Asn-1460, Asp-1475, and Asp-1478. The N-linked (GlcNAc...) asparagine glycan is linked to Asn-1489. Intrachain disulfides connect Cys-1490–Cys-1514, Cys-1496–Cys-1509, Cys-1505–Cys-1521, Cys-1536–Cys-1549, and Cys-1545–Cys-1561. An N-linked (GlcNAc...) asparagine glycan is attached at Asn-1587. O-linked (GalNAc...) threonine glycosylation occurs at Thr-1725. The interval 1728 to 1760 is interaction with PSEN1; it reads PPPPAQLHFMYVAAAAFVLLFFVGCGVLLSRKR. The helical transmembrane segment at 1736-1756 threads the bilayer; that stretch reads FMYVAAAAFVLLFFVGCGVLL. Residues 1757-2555 lie on the Cytoplasmic side of the membrane; it reads SRKRRRQHGQ…QIARIPEAFK (799 aa). Lys-1759 is covalently cross-linked (Glycyl lysine isopeptide (Lys-Gly) (interchain with G-Cter in ubiquitin)). Residues 1780–1808 are disordered; sequence KKKRREPLGEDSVGLKPLKNASDGALMDD. Thr-1861 carries the phosphothreonine modification. 6 ANK repeats span residues 1927–1956, 1960–1990, 1994–2023, 2027–2056, 2060–2089, and 2095–2122; these read TGETALHLAARYSRSDAAKRLLEASADANI, MGRTPLHAAVSADAQGVFQILIRNRATDLDA, DGTTPLILAARLAVEGMLEDLINSHADVNA, LGKSALHWAAAVNNVDAAVVLLKNGANKDM, REETPLFLAAREGSYETAKVLLDHFANRDI, and RLPRDIAQERMHHDIVRLLDEYNLVRSP. The tract at residues 1947-1955 is HIF1AN-binding; that stretch reads LLEASADAN. Asn-1955 carries the (3S)-3-hydroxyasparagine; by HIF1AN; partial modification. The interval 2014-2022 is HIF1AN-binding; the sequence is LINSHADVN. At Asn-2022 the chain carries (3S)-3-hydroxyasparagine; by HIF1AN. 3 disordered regions span residues 2151–2194, 2379–2447, and 2483–2555; these read PGVQ…LDSS, LVQT…QPLG, and TPPS…EAFK. Positions 2379–2408 are enriched in low complexity; that stretch reads LVQTQQVQPQNLQMQQQNLQPANIQQQQSL. Polar residues predominate over residues 2483–2502; that stretch reads TPPSQHSYSSPVDNTPSHQL. The segment covering 2512–2527 has biased composition (low complexity); it reads PSPESPDQWSSSSPHS. The segment covering 2528 to 2547 has biased composition (polar residues); sequence NVSDWSEGVSSPPTSMQSQI.

This sequence belongs to the NOTCH family. As to quaternary structure, heterodimer of a C-terminal fragment N(TM) and an N-terminal fragment N(EC) which are probably linked by disulfide bonds. Interacts with DNER, DTX1, DTX2 and RBPJ/RBPSUH. Also interacts with MAML1, MAML2 and MAML3 which act as transcriptional coactivators for NOTCH1. The NOTCH1 intracellular domain interacts with SNW1; the interaction involves multimerized NOTCH1 NICD and is implicated in a formation of an intermediate preactivation complex which associates with DNA-bound CBF-1/RBPJ. The activated membrane-bound form interacts with AAK1 which promotes NOTCH1 stabilization. Forms a trimeric complex with FBXW7 and SGK1. Interacts with HIF1AN. HIF1AN negatively regulates the function of notch intracellular domain (NICD), accelerating myogenic differentiation. Interacts (via NICD) with SNAI1 (via zinc fingers); the interaction induces SNAI1 degradation via MDM2-mediated ubiquitination and inhibits SNAI1-induced cell invasion. Interacts (via NICD) with MDM2A. Interacts (via NICD) with BCL6; the interaction decreases MAML1 recruitment by NOTCH1 NICD on target genes DNA and inhibits NOTCH1 transactivation activity. Interacts with THBS4. Interacts (via the EGF-like repeat region) with CCN3 (via CTCK domain). Interacts (via EGF-like domains) with DLL4 (via N-terminal DSL and MNNL domains). Interacts with ZMIZ1. Interacts (via NICD domain) with MEGF10 (via the cytoplasmic domain). Interacts with DLL1 and JAG1. Interacts (via NICD domain) with PRAG1. Forms a complex with PRAG1, N1ICD and MAML1, in a MAML1-dependent manner. Interacts (via transmembrane region) with PSEN1; the interaction is direct. Interacts with ZFP64. Post-translationally, synthesized in the endoplasmic reticulum as an inactive form which is proteolytically cleaved by a furin-like convertase in the trans-Golgi network before it reaches the plasma membrane to yield an active, ligand-accessible form. Cleavage results in a C-terminal fragment N(TM) and a N-terminal fragment N(EC). Following ligand binding, it is cleaved by ADAM17 to yield a membrane-associated intermediate fragment called notch extracellular truncation (NEXT). Following endocytosis, this fragment is then cleaved by one of the catalytic subunits of gamma-secretase (PSEN1 or PSEN2), to release a Notch-derived peptide containing the intracellular domain (NICD) from the membrane. In terms of processing, phosphorylated. O-glycosylated on the EGF-like domains. O-glucosylated at Ser-435 by KDELC1 and KDELC2. Contains both O-linked fucose and O-linked glucose in the EGF-like domains 11, 12 and 13, which are interacting with the residues on DLL4. O-linked glycosylation by GALNT11 is involved in determination of left/right symmetry: glycosylation promotes activation of NOTCH1, possibly by promoting cleavage by ADAM17, modulating the balance between motile and immotile (sensory) cilia at the left-right organiser (LRO). MFNG-, RFNG- and LFNG-mediated modification of O-fucose residues at specific EGF-like domains results in inhibition of its activation by JAG1 and enhancement of its activation by DLL1 via an increased binding to DLL1. Post-translationally, ubiquitinated. Undergoes 'Lys-29'-linked polyubiquitination by ITCH; promotes the lysosomal degradation of non-activated internalized NOTCH1. Deubiquitination by USP12 is required for transport of internalized non-activated receptor from late endosomes to lysosomes for degradation. Monoubiquitination at Lys-1759 is required for activation by gamma-secretase cleavage, it promotes interaction with AAK1, which stabilizes it. Deubiquitination by EIF3F is necessary for nuclear import of activated Notch. In terms of processing, hydroxylated at Asn-1955 by HIF1AN. Hydroxylated at Asn-2022 by HIF1AN. Hydroxylation reduces affinity for HI1AN and may thus indirectly modulate negative regulation of NICD. In terms of tissue distribution, in fetal tissues most abundant in spleen, brain stem and lung. Also present in most adult tissues where it is found mainly in lymphoid tissues.

It is found in the cell membrane. The protein resides in the late endosome membrane. The protein localises to the nucleus. Functions as a receptor for membrane-bound ligands Jagged-1 (JAG1), Jagged-2 (JAG2) and Delta-1 (DLL1) to regulate cell-fate determination. Upon ligand activation through the released notch intracellular domain (NICD) it forms a transcriptional activator complex with RBPJ/RBPSUH and activates genes of the enhancer of split locus. Affects the implementation of differentiation, proliferation and apoptotic programs. Involved in angiogenesis; negatively regulates endothelial cell proliferation and migration and angiogenic sprouting. Involved in the maturation of both CD4(+) and CD8(+) cells in the thymus. Important for follicular differentiation and possibly cell fate selection within the follicle. During cerebellar development, functions as a receptor for neuronal DNER and is involved in the differentiation of Bergmann glia. Represses neuronal and myogenic differentiation. May play an essential role in postimplantation development, probably in some aspect of cell specification and/or differentiation. May be involved in mesoderm development, somite formation and neurogenesis. May enhance HIF1A function by sequestering HIF1AN away from HIF1A. Required for the THBS4 function in regulating protective astrogenesis from the subventricular zone (SVZ) niche after injury. Involved in determination of left/right symmetry by modulating the balance between motile and immotile (sensory) cilia at the left-right organiser (LRO). The protein is Neurogenic locus notch homolog protein 1 (NOTCH1) of Homo sapiens (Human).